Here is a 515-residue protein sequence, read N- to C-terminus: 2-isopropylmalate synthase (515 aa).

A Pyruvate carboxyltransferase domain is found at L5–V268. 4 residues coordinate Mn(2+): D14, H202, H204, and N239. Residues K396–A515 are regulatory domain.

The protein belongs to the alpha-IPM synthase/homocitrate synthase family. LeuA type 1 subfamily. As to quaternary structure, homodimer. Mn(2+) is required as a cofactor.

It is found in the cytoplasm. It catalyses the reaction 3-methyl-2-oxobutanoate + acetyl-CoA + H2O = (2S)-2-isopropylmalate + CoA + H(+). It participates in amino-acid biosynthesis; L-leucine biosynthesis; L-leucine from 3-methyl-2-oxobutanoate: step 1/4. Catalyzes the condensation of the acetyl group of acetyl-CoA with 3-methyl-2-oxobutanoate (2-ketoisovalerate) to form 3-carboxy-3-hydroxy-4-methylpentanoate (2-isopropylmalate). This Burkholderia pseudomallei (strain 1106a) protein is 2-isopropylmalate synthase.